A 149-amino-acid polypeptide reads, in one-letter code: Macrodomain Ter protein (149 aa).

Belongs to the MatP family. In terms of assembly, homodimer.

It is found in the cytoplasm. In terms of biological role, required for spatial organization of the terminus region of the chromosome (Ter macrodomain) during the cell cycle. Prevents early segregation of duplicated Ter macrodomains during cell division. Binds specifically to matS, which is a 13 bp signature motif repeated within the Ter macrodomain. This is Macrodomain Ter protein from Vibrio vulnificus (strain YJ016).